Consider the following 77-residue polypeptide: Tautomerase PptA (77 aa).

The active-site Proton acceptor; via imino nitrogen is the Pro2.

The protein belongs to the 4-oxalocrotonate tautomerase family. PptA subfamily. In terms of assembly, homodimer.

Its subcellular location is the cytoplasm. This is Tautomerase PptA from Escherichia coli (strain K12 / MC4100 / BW2952).